The sequence spans 489 residues: Carboxyl-terminal-processing peptidase 1, chloroplastic (489 aa).

A compositionally biased stretch (low complexity) spans 1–20 (MRLLLPFSSPLSATSSPSTP). The segment at 1–27 (MRLLLPFSSPLSATSSPSTPQFIPELP) is disordered. Positions 189–273 (FSRMSKYDIT…TFVVLKVKHG (85 aa)) constitute a PDZ domain. Residues S403 and K428 each act as charge relay system in the active site.

The protein belongs to the peptidase S41A family.

The protein resides in the plastid. It is found in the chloroplast thylakoid lumen. It catalyses the reaction The enzyme shows specific recognition of a C-terminal tripeptide, Xaa-Yaa-Zaa, in which Xaa is preferably Ala or Leu, Yaa is preferably Ala or Tyr, and Zaa is preferably Ala, but then cleaves at a variable distance from the C-terminus. A typical cleavage is -Ala-Ala-|-Arg-Ala-Ala-Lys-Glu-Asn-Tyr-Ala-Leu-Ala-Ala.. Its function is as follows. Protease involved in the C-terminal processing of the chloroplastic D1 protein of photosystem II. This proteolytic processing is necessary to allow the light-driven assembly of the tetranuclear manganese cluster, which is responsible for photosynthetic water oxidation. The chain is Carboxyl-terminal-processing peptidase 1, chloroplastic (CTPA1) from Arabidopsis thaliana (Mouse-ear cress).